Reading from the N-terminus, the 96-residue chain is Co-chaperonin GroES (96 aa).

Belongs to the GroES chaperonin family. Heptamer of 7 subunits arranged in a ring. Interacts with the chaperonin GroEL.

It localises to the cytoplasm. Its function is as follows. Together with the chaperonin GroEL, plays an essential role in assisting protein folding. The GroEL-GroES system forms a nano-cage that allows encapsulation of the non-native substrate proteins and provides a physical environment optimized to promote and accelerate protein folding. GroES binds to the apical surface of the GroEL ring, thereby capping the opening of the GroEL channel. The chain is Co-chaperonin GroES from Trichlorobacter lovleyi (strain ATCC BAA-1151 / DSM 17278 / SZ) (Geobacter lovleyi).